Here is a 175-residue protein sequence, read N- to C-terminus: MLENPLIQQVLFEIMDEDVVGFDVLSVLINTNEVTDDEISRQLDVKLNNIRRILYKLYEARLVDYNREKDEETNWYTYTWKPSLEKVPALVAKKMKNVLKDLKEQLELEETNMFFFCSDCEIKFTFEDAMDSGFRCPQCGGMMYEYDNKKDISILKEQINYLEDEFNKNPLFSAY.

The HTH TFE/IIEalpha-type domain maps to glutamate 3–proline 88.

The protein belongs to the TFE family. As to quaternary structure, monomer. Interaction with RNA polymerase subunits RpoF and RpoE is necessary for Tfe stimulatory transcription activity. Able to interact with Tbp and RNA polymerase in the absence of DNA promoter. Interacts both with the preinitiation and elongation complexes.

Functionally, transcription factor that plays a role in the activation of archaeal genes transcribed by RNA polymerase. Facilitates transcription initiation by enhancing TATA-box recognition by TATA-box-binding protein (Tbp), and transcription factor B (Tfb) and RNA polymerase recruitment. Not absolutely required for transcription in vitro, but particularly important in cases where Tbp or Tfb function is not optimal. It dynamically alters the nucleic acid-binding properties of RNA polymerases by stabilizing the initiation complex and destabilizing elongation complexes. Seems to translocate with the RNA polymerase following initiation and acts by binding to the non template strand of the transcription bubble in elongation complexes. The polypeptide is Transcription factor E (Methanococcus maripaludis (strain C7 / ATCC BAA-1331)).